The primary structure comprises 179 residues: Large ribosomal subunit protein uL5 (179 aa).

This sequence belongs to the universal ribosomal protein uL5 family. Part of the 50S ribosomal subunit; part of the 5S rRNA/L5/L18/L25 subcomplex. Contacts the 5S rRNA and the P site tRNA. Forms a bridge to the 30S subunit in the 70S ribosome.

Its function is as follows. This is one of the proteins that bind and probably mediate the attachment of the 5S RNA into the large ribosomal subunit, where it forms part of the central protuberance. In the 70S ribosome it contacts protein S13 of the 30S subunit (bridge B1b), connecting the 2 subunits; this bridge is implicated in subunit movement. Contacts the P site tRNA; the 5S rRNA and some of its associated proteins might help stabilize positioning of ribosome-bound tRNAs. The polypeptide is Large ribosomal subunit protein uL5 (Buchnera aphidicola subsp. Acyrthosiphon pisum (strain APS) (Acyrthosiphon pisum symbiotic bacterium)).